A 518-amino-acid chain; its full sequence is Membrane-bound lytic murein transglycosylase F (518 aa).

Positions 1-21 are cleaved as a signal peptide; it reads MKKLKINYLFIGILALLLAVA. Residues 22–269 form a non-LT domain region; sequence LWPSIPWFGK…RIEEKYLGHG (248 aa). Positions 270-518 are LT domain; it reads DDFDYVDTRT…SRKGSEEKQN (249 aa). Glu-314 is a catalytic residue.

It in the N-terminal section; belongs to the bacterial solute-binding protein 3 family. The protein in the C-terminal section; belongs to the transglycosylase Slt family.

It is found in the cell outer membrane. The enzyme catalyses Exolytic cleavage of the (1-&gt;4)-beta-glycosidic linkage between N-acetylmuramic acid (MurNAc) and N-acetylglucosamine (GlcNAc) residues in peptidoglycan, from either the reducing or the non-reducing ends of the peptidoglycan chains, with concomitant formation of a 1,6-anhydrobond in the MurNAc residue.. Murein-degrading enzyme that degrades murein glycan strands and insoluble, high-molecular weight murein sacculi, with the concomitant formation of a 1,6-anhydromuramoyl product. Lytic transglycosylases (LTs) play an integral role in the metabolism of the peptidoglycan (PG) sacculus. Their lytic action creates space within the PG sacculus to allow for its expansion as well as for the insertion of various structures such as secretion systems and flagella. This Escherichia coli O6:H1 (strain CFT073 / ATCC 700928 / UPEC) protein is Membrane-bound lytic murein transglycosylase F.